We begin with the raw amino-acid sequence, 1155 residues long: ATP-dependent helicase/deoxyribonuclease subunit B (1155 aa).

Position 8–15 (8–15 (GRSGSGKS)) interacts with ATP. [4Fe-4S] cluster contacts are provided by Cys793, Cys1115, Cys1118, and Cys1124.

The protein belongs to the helicase family. AddB/RexB type 1 subfamily. As to quaternary structure, heterodimer of AddA and AddB. Mg(2+) is required as a cofactor. Requires [4Fe-4S] cluster as cofactor.

The heterodimer acts as both an ATP-dependent DNA helicase and an ATP-dependent, dual-direction single-stranded exonuclease. Recognizes the chi site generating a DNA molecule suitable for the initiation of homologous recombination. The AddB subunit has 5' -&gt; 3' nuclease activity but not helicase activity. The polypeptide is ATP-dependent helicase/deoxyribonuclease subunit B (Clostridioides difficile (strain 630) (Peptoclostridium difficile)).